Consider the following 276-residue polypeptide: Putative pyruvate, phosphate dikinase regulatory protein 1 (276 aa).

157–164 serves as a coordination point for ADP; the sequence is GVSRTSKT.

This sequence belongs to the pyruvate, phosphate/water dikinase regulatory protein family. PDRP subfamily.

It carries out the reaction N(tele)-phospho-L-histidyl/L-threonyl-[pyruvate, phosphate dikinase] + ADP = N(tele)-phospho-L-histidyl/O-phospho-L-threonyl-[pyruvate, phosphate dikinase] + AMP + H(+). The enzyme catalyses N(tele)-phospho-L-histidyl/O-phospho-L-threonyl-[pyruvate, phosphate dikinase] + phosphate + H(+) = N(tele)-phospho-L-histidyl/L-threonyl-[pyruvate, phosphate dikinase] + diphosphate. In terms of biological role, bifunctional serine/threonine kinase and phosphorylase involved in the regulation of the pyruvate, phosphate dikinase (PPDK) by catalyzing its phosphorylation/dephosphorylation. This Staphylococcus haemolyticus (strain JCSC1435) protein is Putative pyruvate, phosphate dikinase regulatory protein 1.